The primary structure comprises 350 residues: tRNA uridine(34) hydroxylase (350 aa).

A Rhodanese domain is found at 146 to 240 (DDPDALFIDM…YARKAREQGL (95 aa)). Cys-200 acts as the Cysteine persulfide intermediate in catalysis.

The protein belongs to the TrhO family.

The catalysed reaction is uridine(34) in tRNA + AH2 + O2 = 5-hydroxyuridine(34) in tRNA + A + H2O. Its function is as follows. Catalyzes oxygen-dependent 5-hydroxyuridine (ho5U) modification at position 34 in tRNAs, the first step in 5-carboxymethoxyuridine (cmo5U) biosynthesis. May be part of an alternate pathway, which is able to bypass cmo5U biogenesis in a subset of tRNAs under aerobic conditions. The sequence is that of tRNA uridine(34) hydroxylase from Escherichia coli (strain K12).